A 353-amino-acid chain; its full sequence is MKFALTGGGTGGHLSIAKALAIELEKQGIEAIYLGSTYGQDKEWFENSPLFSERYFFNTQGVVNKSFFKKIRSLFLQAKAAFKAKEILKKHQITHTISVGGFSAGPASFASLLNKIPLYIHEQNAIKGSLNRYLSPKAKAVFSSYAFKDKGNHVLTSYPVQNAFFDHARTRTEIKHILFLGGSQGAKAINEFALLNAPKLTKQGIKITHICGPNSYEQVRFFYQELGLLDKIELFAFHNNITEVMHRADLCVSRAGASSVWELCANGLPTIFIPYPFASNNHQYYNVLEFEKENLCYVVPQNELLPKKLFEVIRKLNQKDDQGNKNLTTISAKLQQKIAKDGAKTIIETILSA.

UDP-N-acetyl-alpha-D-glucosamine-binding positions include 10–12, asparagine 124, serine 183, and glutamine 283; that span reads TGG.

The protein belongs to the glycosyltransferase 28 family. MurG subfamily.

The protein resides in the cell inner membrane. It carries out the reaction di-trans,octa-cis-undecaprenyl diphospho-N-acetyl-alpha-D-muramoyl-L-alanyl-D-glutamyl-meso-2,6-diaminopimeloyl-D-alanyl-D-alanine + UDP-N-acetyl-alpha-D-glucosamine = di-trans,octa-cis-undecaprenyl diphospho-[N-acetyl-alpha-D-glucosaminyl-(1-&gt;4)]-N-acetyl-alpha-D-muramoyl-L-alanyl-D-glutamyl-meso-2,6-diaminopimeloyl-D-alanyl-D-alanine + UDP + H(+). Its pathway is cell wall biogenesis; peptidoglycan biosynthesis. In terms of biological role, cell wall formation. Catalyzes the transfer of a GlcNAc subunit on undecaprenyl-pyrophosphoryl-MurNAc-pentapeptide (lipid intermediate I) to form undecaprenyl-pyrophosphoryl-MurNAc-(pentapeptide)GlcNAc (lipid intermediate II). In Helicobacter pylori (strain J99 / ATCC 700824) (Campylobacter pylori J99), this protein is UDP-N-acetylglucosamine--N-acetylmuramyl-(pentapeptide) pyrophosphoryl-undecaprenol N-acetylglucosamine transferase.